The following is a 184-amino-acid chain: Photosystem I assembly protein Ycf4 (184 aa).

2 consecutive transmembrane segments (helical) span residues 21-43 (NFCW…ISSY) and 58-80 (LFFP…SSYL).

This sequence belongs to the Ycf4 family.

The protein localises to the plastid. It localises to the chloroplast thylakoid membrane. Functionally, seems to be required for the assembly of the photosystem I complex. In Carpobrotus chilensis (Sea fig), this protein is Photosystem I assembly protein Ycf4.